Here is a 194-residue protein sequence, read N- to C-terminus: WASH complex subunit 3 (194 aa).

Met-1 carries the N-acetylmethionine modification. Positions 46–74 (TVCEEKLADLSLRIQQIETTLNILDAKLS) form a coiled coil. A compositionally biased stretch (polar residues) spans 98 to 123 (THSEATSEQSQQNSLQDSGPQESEVT). Disordered regions lie at residues 98–125 (THSE…VTPE) and 158–194 (SEGL…SFSD).

Belongs to the CCDC53 family. Component of the WASH core complex also described as WASH regulatory complex (SHRC) composed of WASHC1, WASHC2, WASHC3, WASHC4 and WASHC5. The WASH core complex associates via WASHC2 with the F-actin-capping protein dimer (formed by CAPZA1, CAPZA2 or CAPZA3 and CAPZB) in a transient or substoichiometric manner which was initially described as WASH complex.

The protein localises to the early endosome. Acts as a component of the WASH core complex that functions as a nucleation-promoting factor (NPF) at the surface of endosomes, where it recruits and activates the Arp2/3 complex to induce actin polymerization, playing a key role in the fission of tubules that serve as transport intermediates during endosome sorting. This Bos taurus (Bovine) protein is WASH complex subunit 3.